We begin with the raw amino-acid sequence, 523 residues long: Chitinase Chi52 (523 aa).

Residues 1 to 30 form the signal peptide; it reads MNQAVRFRPVITFALAFLLLITWFAPRADA. The interval 80–101 is disordered; sequence GSGGETPTPDTAPPSVPAGLTS. The region spanning 95 to 180 is the Fibronectin type-III domain; the sequence is VPAGLTSSSI…TSLSVTTSNG (86 aa). The region spanning 190 to 513 is the GH18 domain; sequence KWLIGYWHNF…SAHRPFLNGL (324 aa). The active-site Proton donor is Glu302.

Belongs to the glycosyl hydrolase 18 family. Chitinase class II subfamily.

It catalyses the reaction Random endo-hydrolysis of N-acetyl-beta-D-glucosaminide (1-&gt;4)-beta-linkages in chitin and chitodextrins.. Activity is inhibited by Cu(2+) and Co(2+), and almost completely inhibited by SDS. Its function is as follows. Acidic chitinase that displays a broad substrate specificity, showing the highest specific activity toward colloidal chitin, followed by ethylene glycol chitin and ball milled chitin, but exhibits no activity toward powdery chitin and chitosan. Hydrolyzes colloidal chitin and chitooligosaccharides with degree of polymerization 2-5 to release mainly N-acetyl chitobiose. Displays inhibition effects on the growth of some phytopathogenic fungi, including Alternaria alstroemeriae, Botrytis cinerea, Rhizoctonia solani, Sclerotinia sclerotiorum and Valsa mali. This Paenibacillus xylanexedens protein is Chitinase Chi52.